The following is a 333-amino-acid chain: 6-phosphogluconolactonase (333 aa).

It belongs to the cycloisomerase 2 family.

The enzyme catalyses 6-phospho-D-glucono-1,5-lactone + H2O = 6-phospho-D-gluconate + H(+). Its pathway is carbohydrate degradation; pentose phosphate pathway; D-ribulose 5-phosphate from D-glucose 6-phosphate (oxidative stage): step 2/3. Catalyzes the hydrolysis of 6-phosphogluconolactone to 6-phosphogluconate. This Cronobacter sakazakii (strain ATCC BAA-894) (Enterobacter sakazakii) protein is 6-phosphogluconolactonase.